Here is a 379-residue protein sequence, read N- to C-terminus: Cytochrome b (379 aa).

Helical transmembrane passes span F33 to M53, W77 to V98, W113 to L133, and F178 to L198. Heme b is bound by residues H83 and H97. Heme b-binding residues include H182 and H196. Residue H201 participates in a ubiquinone binding. 4 consecutive transmembrane segments (helical) span residues I226 to F246, L288 to N308, V320 to G340, and F347 to P367.

Belongs to the cytochrome b family. As to quaternary structure, the cytochrome bc1 complex contains 11 subunits: 3 respiratory subunits (MT-CYB, CYC1 and UQCRFS1), 2 core proteins (UQCRC1 and UQCRC2) and 6 low-molecular weight proteins (UQCRH/QCR6, UQCRB/QCR7, UQCRQ/QCR8, UQCR10/QCR9, UQCR11/QCR10 and a cleavage product of UQCRFS1). This cytochrome bc1 complex then forms a dimer. The cofactor is heme b.

The protein resides in the mitochondrion inner membrane. Its function is as follows. Component of the ubiquinol-cytochrome c reductase complex (complex III or cytochrome b-c1 complex) that is part of the mitochondrial respiratory chain. The b-c1 complex mediates electron transfer from ubiquinol to cytochrome c. Contributes to the generation of a proton gradient across the mitochondrial membrane that is then used for ATP synthesis. The protein is Cytochrome b (MT-CYB) of Akodon iniscatus (Intelligent grass mouse).